Here is a 264-residue protein sequence, read N- to C-terminus: Sec-independent protein translocase protein TatC (264 aa).

6 helical membrane-spanning segments follow: residues 20–40 (VVVI…EPAE), 85–105 (FFAQ…PVAV), 131–151 (AVGL…PYIL), 175–195 (FVLQ…VMFA), 211–231 (IRYA…DGSG), and 232–252 (VTMW…MFFA).

It belongs to the TatC family. In terms of assembly, forms a complex with TatA.

It localises to the cell membrane. Functionally, part of the twin-arginine translocation (Tat) system that transports large folded proteins containing a characteristic twin-arginine motif in their signal peptide across membranes. This Cenarchaeum symbiosum (strain A) protein is Sec-independent protein translocase protein TatC.